The primary structure comprises 661 residues: uncharacterized protein (661 aa).

7 helical membrane passes run 37–57 (VFLG…LFLS), 87–107 (INSP…AVFI), 120–140 (WLLL…NVIL), 158–178 (VFWQ…PIIV), 243–263 (LLDI…LYTI), 266–286 (TLMW…IAIG), and 341–361 (FNLL…YNYF). The region spanning 123–410 (LGVLLSLLFV…VTNQIQNITE (288 aa)) is the ABC transmembrane type-1 domain. The region spanning 453–659 (VALENVTLSP…AEGRWQISPI (207 aa)) is the ABC transporter domain. 487 to 494 (GPSGSGKS) lines the ATP pocket.

It belongs to the ABC transporter superfamily.

It localises to the cell inner membrane. This is an uncharacterized protein from Synechocystis sp. (strain ATCC 27184 / PCC 6803 / Kazusa).